The primary structure comprises 214 residues: Octanoyltransferase (214 aa).

Residues 28–210 form the BPL/LPL catalytic domain; it reads GTAEDALYLL…EFGKVFTDTA (183 aa). Substrate is bound by residues 73–80, 140–142, and 153–155; these read RGGNITCH, SIG, and GLS. Cysteine 171 functions as the Acyl-thioester intermediate in the catalytic mechanism.

It belongs to the LipB family.

The protein resides in the cytoplasm. The enzyme catalyses octanoyl-[ACP] + L-lysyl-[protein] = N(6)-octanoyl-L-lysyl-[protein] + holo-[ACP] + H(+). It functions in the pathway protein modification; protein lipoylation via endogenous pathway; protein N(6)-(lipoyl)lysine from octanoyl-[acyl-carrier-protein]: step 1/2. Functionally, catalyzes the transfer of endogenously produced octanoic acid from octanoyl-acyl-carrier-protein onto the lipoyl domains of lipoate-dependent enzymes. Lipoyl-ACP can also act as a substrate although octanoyl-ACP is likely to be the physiological substrate. In Maridesulfovibrio salexigens (strain ATCC 14822 / DSM 2638 / NCIMB 8403 / VKM B-1763) (Desulfovibrio salexigens), this protein is Octanoyltransferase.